The sequence spans 488 residues: Protein DETOXIFICATION 35 (488 aa).

12 consecutive transmembrane segments (helical) span residues 38–58, 73–93, 121–141, 150–170, 187–207, 218–238, 262–282, 296–316, 336–356, 379–401, 408–428, and 439–459; these read LWMI…VSSV, AVSI…LGMG, IILF…TPVL, IAVP…SLAF, IAWI…LFII, LAFN…VIGW, IASA…IVLT, SICM…NAAI, VYVT…AIII, AYLL…VAVG, VAYI…YLLG, and WSGM…VLYK.

The protein belongs to the multi antimicrobial extrusion (MATE) (TC 2.A.66.1) family. As to expression, highly expressed in inflorescence tissues, especially in floral epidermal guard cells including those of the anthers, stigma, siliques and nectaries. Also detected in the meristematic zone of the root apex and in the elongation zone through to the fully expanded cells of the differentiation zone.

The protein resides in the vacuole membrane. Functionally, multidrug and toxin efflux transporter involved in flavonoid metabolism. Required for proper reproductive development. In Arabidopsis thaliana (Mouse-ear cress), this protein is Protein DETOXIFICATION 35.